The sequence spans 605 residues: MLRQYKEQIKSSPQSCGVYKMVGDKNKVLYVGKAKNLKSRLSDYLQFENLSERIRVMLSQVIKVEIFITENEIEALLLEAQLIKSLKPLYNIVLKDGKFYPYITISKHDYPRIAKYRGKFKKNEFHYYGPFTSAAAVKQTILSLQKAFLLRVCSDQYFSSTKRPCIEYQIKRCSAPCVDKITKDDYCQSVKQARNTLLGRNKEVKEQLLFTMRKCSSEENYELAAIYRDRVKFLEQIQIQHTDFSFEKDADFFSIVREEDLACISVLSFRNKDNYGSTPYFAENCGDHSNDEILSTFLVNFYNSANIPPIQIYVPDSIVDKEIIEQALYKVAQKPVKVLHAKNKKERDLLKFVYDNSQHSLEQKLIDYRNNLEKLEELSKIFLLPNIPKRIEVYDNSHIFGNQQIGVMVVAGQEGFLKSEYRKFTIKEKFSGDDYKMMREVLTRRFSGNIKGIIPDFLLIDGGPGHVSIVQNVLEVLNINVPFACMAKGPDRNAGNERFYMLGREEFSLANDSKVMLYLQSLRNEAHRFAITSHRKKRDKQFIVSQLSKIPGIGNKRKKALMSYFGSVKNISKASLAEIQNIPGISKGLAEVILKHVNYKRGVLE.

The GIY-YIG domain occupies 14-92; sequence QSCGVYKMVG…IKSLKPLYNI (79 aa). One can recognise a UVR domain in the interval 202–237; the sequence is KEVKEQLLFTMRKCSSEENYELAAIYRDRVKFLEQI.

The protein belongs to the UvrC family. As to quaternary structure, interacts with UvrB in an incision complex.

Its subcellular location is the cytoplasm. In terms of biological role, the UvrABC repair system catalyzes the recognition and processing of DNA lesions. UvrC both incises the 5' and 3' sides of the lesion. The N-terminal half is responsible for the 3' incision and the C-terminal half is responsible for the 5' incision. The protein is UvrABC system protein C of Wolbachia sp. subsp. Drosophila simulans (strain wRi).